Consider the following 410-residue polypeptide: MSRDPKLSLSKFLECLNEIEHEFLRDKVEHRPVLVRKLQELQQKTPKHVAKLPHEPEMIQQIHQAAHRIDIVAQAFIRFDQKFVSLCSEIVHDTTKVMQEANVVSPGEGCRNLSEDLPAYHMRNHFLHTLENPYPTQEEKEGLVRLTNESTARIRPSNAIRPPLEVHQLTLWFINARRRSGWSHILKKFAREDPSRMKRLVRAKLSSSNQSTPPSLTSEKPSDDLDVVLSDNLGRPLTLADKQQFEDDWASMISWIKYGVKEKVGDWVYDLCAASKKTPKPGMPRPVTTVAKRHPARKTKPAAKPKSRTANPRASTTPSIDSTLDSSKLESTPELSMCSTADTSFSTFGSSLSMSHYNPFQDGNDILQSPTVKARGNRKVKALPKRAGKQQPDEVDNGKIPFLCLSVAFV.

Positions 1-110 (MSRDPKLSLS…ANVVSPGEGC (110 aa)) are variable domain between B alleles. A DNA-binding region (homeobox; TALE-type) is located at residues 107-184 (GEGCRNLSED…NARRRSGWSH (78 aa)). The highly conserved between B alleles stretch occupies residues 111–410 (RNLSEDLPAY…PFLCLSVAFV (300 aa)). 2 disordered regions span residues 203-224 (AKLS…PSDD) and 278-335 (TPKP…TPEL). Polar residues predominate over residues 205–219 (LSSSNQSTPPSLTSE). Positions 276 to 308 (KKTPKPGMPRPVTTVAKRHPARKTKPAAKPKSR) match the Nuclear localization signal motif. Positions 291-307 (AKRHPARKTKPAAKPKS) are enriched in basic residues. A compositionally biased stretch (polar residues) spans 312 to 335 (PRASTTPSIDSTLDSSKLESTPEL). The tract at residues 333-410 (PELSMCSTAD…PFLCLSVAFV (78 aa)) is not essential for B3 function.

It belongs to the TALE/M-ATYP homeobox family.

It is found in the nucleus. Its function is as follows. The B locus has at least 25 alleles, and any combination of two different B alleles yields a multimeric regulatory protein, that activates genes responsible for the pathogenicity and for the sexual development of the fungus within the corn plant. The protein is Mating-type locus allele B3 protein of Mycosarcoma maydis (Corn smut fungus).